We begin with the raw amino-acid sequence, 570 residues long: Capsid vertex component 2 (570 aa).

An interaction with major capsid protein/MCP region spans residues 1–54 (MALSGHVLIDPARLPRDTGPELMWAPSLRNSLRVSPEALELAEREAERARSERW). A disordered region spans residues 102 to 123 (QVRSPSTGGRSAPAPPSPSPAQ).

The protein belongs to the herpesviridae CVC2 protein family. In terms of assembly, heterodimerizes with CVC1. Interacts with major capsid protein/MCP and triplex capsid protein 1/TRX1 at the pentamer vertices. Interacts with the large tegument protein/LTP.

Its subcellular location is the virion. The protein resides in the host nucleus. Capsid vertex-specific component that plays a role during viral DNA encapsidation, assuring correct genome cleavage and presumably stabilizing capsids that contain full-length viral genomes. Participates in the interaction between the capsid and the tegument through interaction with the large tegument protein/LTP. In Homo sapiens (Human), this protein is Capsid vertex component 2.